We begin with the raw amino-acid sequence, 773 residues long: ATP-dependent permease MDL2, mitochondrial (773 aa).

A mitochondrion-targeting transit peptide spans 1-90 (MLNGRLPLLR…SPISKGSARS (90 aa)). Residues 73–84 (PETSLPSASPIS) are compositionally biased toward polar residues. The segment at 73–95 (PETSLPSASPISKGSARSAHAKE) is disordered. An ABC transmembrane type-1 domain is found at 119 to 413 (LLTAILLLTI…LSTFYSEIMQ (295 aa)). The next 3 helical transmembrane spans lie at 123 to 143 (ILLL…IGIV), 170 to 192 (FLSF…FILL), and 257 to 277 (VVGV…LLFF). 481-488 (GPSGRGKS) is an ATP binding site. Positions 493-733 (LLLRYYNPTT…DDNDNNHDND (241 aa)) constitute an ABC transporter domain. Basic and acidic residues-rich tracts occupy residues 706 to 733 (KEDL…HDND) and 740 to 762 (ETKD…DAAK). The disordered stretch occupies residues 706 to 773 (KEDLNESKEH…ANPIKITPQP (68 aa)).

Belongs to the ABC transporter superfamily. ABCB family. Mitochondrial peptide exporter (TC 3.A.1.212) subfamily.

The protein resides in the mitochondrion inner membrane. This chain is ATP-dependent permease MDL2, mitochondrial (MDL2), found in Saccharomyces cerevisiae (strain ATCC 204508 / S288c) (Baker's yeast).